We begin with the raw amino-acid sequence, 126 residues long: MPTINQLVRKGRQSETTKSKSPALQDCPQRRGVCTRVYTTTPKKPNSALRKVAKVRLTNGFEVISYIGGEGHNLQEHSVVLIRGGRVKDLPGVRYHMVRGSLDTQGVKDRKQARSKYGAKRAKAAK.

The interval 1-28 (MPTINQLVRKGRQSETTKSKSPALQDCP) is disordered. 3-methylthioaspartic acid is present on aspartate 89. The segment at 103–126 (DTQGVKDRKQARSKYGAKRAKAAK) is disordered. The span at 113-126 (ARSKYGAKRAKAAK) shows a compositional bias: basic residues.

It belongs to the universal ribosomal protein uS12 family. Part of the 30S ribosomal subunit. Contacts proteins S8 and S17. May interact with IF1 in the 30S initiation complex.

Its function is as follows. With S4 and S5 plays an important role in translational accuracy. Interacts with and stabilizes bases of the 16S rRNA that are involved in tRNA selection in the A site and with the mRNA backbone. Located at the interface of the 30S and 50S subunits, it traverses the body of the 30S subunit contacting proteins on the other side and probably holding the rRNA structure together. The combined cluster of proteins S8, S12 and S17 appears to hold together the shoulder and platform of the 30S subunit. This chain is Small ribosomal subunit protein uS12, found in Burkholderia orbicola (strain MC0-3).